A 429-amino-acid chain; its full sequence is Trigger factor (429 aa).

The region spanning Asp162–Pro247 is the PPIase FKBP-type domain.

Belongs to the FKBP-type PPIase family. Tig subfamily.

Its subcellular location is the cytoplasm. The catalysed reaction is [protein]-peptidylproline (omega=180) = [protein]-peptidylproline (omega=0). Functionally, involved in protein export. Acts as a chaperone by maintaining the newly synthesized protein in an open conformation. Functions as a peptidyl-prolyl cis-trans isomerase. In Fusobacterium nucleatum subsp. nucleatum (strain ATCC 25586 / DSM 15643 / BCRC 10681 / CIP 101130 / JCM 8532 / KCTC 2640 / LMG 13131 / VPI 4355), this protein is Trigger factor.